We begin with the raw amino-acid sequence, 159 residues long: Cyclic pyranopterin monophosphate synthase (159 aa).

Residues L75–H77 and M113–E114 contribute to the substrate site. Residue D128 is part of the active site.

Belongs to the MoaC family. In terms of assembly, homohexamer; trimer of dimers.

It carries out the reaction (8S)-3',8-cyclo-7,8-dihydroguanosine 5'-triphosphate = cyclic pyranopterin phosphate + diphosphate. Its pathway is cofactor biosynthesis; molybdopterin biosynthesis. Functionally, catalyzes the conversion of (8S)-3',8-cyclo-7,8-dihydroguanosine 5'-triphosphate to cyclic pyranopterin monophosphate (cPMP). This Vibrio vulnificus (strain YJ016) protein is Cyclic pyranopterin monophosphate synthase.